We begin with the raw amino-acid sequence, 473 residues long: 3-isopropylmalate dehydratase large subunit (473 aa).

[4Fe-4S] cluster-binding residues include C354, C414, and C417. The tract at residues 425 to 448 (LAPGQRSASTSNRNFEGRQGRGGR) is disordered.

Belongs to the aconitase/IPM isomerase family. LeuC type 1 subfamily. Heterodimer of LeuC and LeuD. [4Fe-4S] cluster is required as a cofactor.

The enzyme catalyses (2R,3S)-3-isopropylmalate = (2S)-2-isopropylmalate. It functions in the pathway amino-acid biosynthesis; L-leucine biosynthesis; L-leucine from 3-methyl-2-oxobutanoate: step 2/4. In terms of biological role, catalyzes the isomerization between 2-isopropylmalate and 3-isopropylmalate, via the formation of 2-isopropylmaleate. In Acidothermus cellulolyticus (strain ATCC 43068 / DSM 8971 / 11B), this protein is 3-isopropylmalate dehydratase large subunit.